Consider the following 348-residue polypeptide: Anthranilate phosphoribosyltransferase (348 aa).

Residues G81, 84 to 85 (GD), 91 to 94 (NVST), 109 to 117 (KHGNRAVSG), and S121 each bind 5-phospho-alpha-D-ribose 1-diphosphate. An anthranilate-binding site is contributed by G81. Position 93 (S93) interacts with Mg(2+). N112 provides a ligand contact to anthranilate. Anthranilate is bound at residue R167. Mg(2+) contacts are provided by D226 and E227.

It belongs to the anthranilate phosphoribosyltransferase family. As to quaternary structure, homodimer. It depends on Mg(2+) as a cofactor.

The enzyme catalyses N-(5-phospho-beta-D-ribosyl)anthranilate + diphosphate = 5-phospho-alpha-D-ribose 1-diphosphate + anthranilate. It functions in the pathway amino-acid biosynthesis; L-tryptophan biosynthesis; L-tryptophan from chorismate: step 2/5. Catalyzes the transfer of the phosphoribosyl group of 5-phosphorylribose-1-pyrophosphate (PRPP) to anthranilate to yield N-(5'-phosphoribosyl)-anthranilate (PRA). This is Anthranilate phosphoribosyltransferase from Ectopseudomonas mendocina (strain ymp) (Pseudomonas mendocina).